A 604-amino-acid chain; its full sequence is Kelch-like protein 15 (604 aa).

A BTB domain is found at 31–98; the sequence is LDVTLVIEDH…MYYGTIELSM (68 aa). The region spanning 133 to 237 is the BACK domain; sequence CAEIMRLLDD…TPTSVFEKVK (105 aa). Kelch repeat units follow at residues 328–379, 381–426, 428–473, 489–542, and 544–590; these read FVFL…VIGK, IYAV…VLNN, LFIT…NKSK, KLYV…VLDK, and IMVL…VCNL.

Homodimer. Dimerization does not affect PPP2R5B-binding, but is required for its proteasomal degradation. Interacts with CUL3. Directly interacts with PPP2R5B; this interaction leads to PPP2R5B proteasomal degradation. Interacts with RBBP8/CtIP; this interaction leads to RBBP8 proteasomal degradation. Interacts with PACMP micropeptide; interaction prevents ubiquitination and degradation of RBBP8/CtIP.

The protein localises to the nucleus. Its pathway is protein modification; protein ubiquitination. In terms of biological role, substrate-specific adapter for CUL3 E3 ubiquitin-protein ligase complex. Acts as an adapter for CUL3 to target the serine/threonine-protein phosphatase 2A (PP2A) subunit PPP2R5B for ubiquitination and subsequent proteasomal degradation, thus promoting exchange with other regulatory subunits. Acts as an adapter for CUL3 to target the DNA-end resection factor RBBP8/CtIP for ubiquitination and subsequent proteasomal degradation. Through the regulation of RBBP8/CtIP protein turnover, plays a key role in DNA damage response, favoring DNA double-strand repair through error-prone non-homologous end joining (NHEJ) over error-free, RBBP8-mediated homologous recombination (HR). This chain is Kelch-like protein 15 (KLHL15), found in Homo sapiens (Human).